The primary structure comprises 190 residues: Transcription factor E (190 aa).

The region spanning 4–87 (KNKALLEIAK…YWHLETKRLP (84 aa)) is the HTH TFE/IIEalpha-type domain. The segment at 170–190 (PSPKKEKKKTRAKAKRKTRKK) is disordered. Residues 174 to 190 (KEKKKTRAKAKRKTRKK) show a composition bias toward basic residues.

The protein belongs to the TFE family. In terms of assembly, monomer. Interaction with RNA polymerase subunits RpoF and RpoE is necessary for Tfe stimulatory transcription activity. Able to interact with Tbp and RNA polymerase in the absence of DNA promoter. Interacts both with the preinitiation and elongation complexes.

In terms of biological role, transcription factor that plays a role in the activation of archaeal genes transcribed by RNA polymerase. Facilitates transcription initiation by enhancing TATA-box recognition by TATA-box-binding protein (Tbp), and transcription factor B (Tfb) and RNA polymerase recruitment. Not absolutely required for transcription in vitro, but particularly important in cases where Tbp or Tfb function is not optimal. It dynamically alters the nucleic acid-binding properties of RNA polymerases by stabilizing the initiation complex and destabilizing elongation complexes. Seems to translocate with the RNA polymerase following initiation and acts by binding to the non template strand of the transcription bubble in elongation complexes. This Pyrococcus abyssi (strain GE5 / Orsay) protein is Transcription factor E.